A 20-amino-acid chain; its full sequence is 21 kDa cold shock-induced protein (20 aa).

Basic and acidic residues predominate over residues 1–12 (TDSIKETIKETV). Residues 1-20 (TDSIKETIKETVNHQAEWPY) form a disordered region.

In Streptococcus thermophilus, this protein is 21 kDa cold shock-induced protein.